A 184-amino-acid polypeptide reads, in one-letter code: FMRFamide-like neuropeptides 3 (184 aa).

Positions 1-23 are cleaved as a signal peptide; sequence MISPNHLILLFCVNCAFLVASDA. Positions 24 to 25 are excised as a propeptide; sequence TP. Residue phenylalanine 35 is modified to Phenylalanine amide. A propeptide spanning residues 39-73 is cleaved from the precursor; the sequence is AIADEMTFEEDGYYPSNVMWKRSTVDSSEPVIRDQ. 4 positions are modified to phenylalanine amide: phenylalanine 82, phenylalanine 95, phenylalanine 111, and phenylalanine 126. Positions 90–110 are disordered; sequence FGTMRFGKRNPENDTPFGTMR. Residues 130–142 constitute a propeptide that is removed on maturation; that stretch reads EDGNAPFGTMKFG. The segment at 150-184 is disordered; it reads LGTMRFGKRSADDSAPFGTMRFGKRNPLGTMRFGK. Residues phenylalanine 155, phenylalanine 171, and phenylalanine 182 each carry the phenylalanine amide modification.

It belongs to the FARP (FMRFamide related peptide) family. As to expression, each flp gene is expressed in a distinct set of neurons. Flp-3 is expressed in the IL1 and PQR neurons.

The protein localises to the secreted. Functionally, FMRFamides and FMRFamide-like peptides are neuropeptides. SAEPFGTMRF-amide inhibits the activity of dissected pharyngeal myogenic muscle system. The protein is FMRFamide-like neuropeptides 3 of Caenorhabditis elegans.